The following is a 599-amino-acid chain: MNIKNYTIEELEELSQKIRQRILEVVSKNGGHLSSTLGAVELIVSMHYVFDVEKDPFIFDVSHQAYAHKLLTDRWEQFDTLRQFGGISGYTKPKESPYDYWVAGHSSTSISLAVGAAKAIALKNEDRVPVVLIGDGAMSAGMVYEALNELGDRKYPVVIILNDNEMSIAKPIGAVSKYLSQKMASPFYQNMKKRTEQLLKHLPESATYIAKRMEESLKLITPGILFEELGIDYIGPIDGHDLKVLIETLTIAKQMNRPVIIHAQTLKGKGYKIAEGYYEHWHGVGPFDISTGESLKKSTKPSATSIFSKKLYDLAKEDETVVGVTAAMPSGTGLKPLIEDFGDRFWDVGIAEQHAVTSMGPLAKEGFKPFVAIYSTFLQRGYDQVIHDIALMDVGVAFAIDRAGIVGEDGETHQGAFDVSYLRPIPNMHLFAPRDPKTLEYAVEFAKDFDRPCAFRYPRGSFILDDEFEAKPFELGKAELLVESEGDVLFVGYGNGVGRAYETMKHIDEPVSLLDLRFVKPLDVELLQELSKRYRQWFVFSDSAKLGGVASALLELELPVEIVTFEYEDQFIPHGKVIDVEKALGLLPQQLAKRVKSFI.

Thiamine diphosphate-binding positions include histidine 63 and 104–106 (GHS). A Mg(2+)-binding site is contributed by aspartate 135. Thiamine diphosphate-binding positions include 136–137 (GA), asparagine 164, tyrosine 271, and glutamate 352. Asparagine 164 is a Mg(2+) binding site.

Belongs to the transketolase family. DXPS subfamily. Homodimer. Mg(2+) is required as a cofactor. The cofactor is thiamine diphosphate.

The enzyme catalyses D-glyceraldehyde 3-phosphate + pyruvate + H(+) = 1-deoxy-D-xylulose 5-phosphate + CO2. It participates in metabolic intermediate biosynthesis; 1-deoxy-D-xylulose 5-phosphate biosynthesis; 1-deoxy-D-xylulose 5-phosphate from D-glyceraldehyde 3-phosphate and pyruvate: step 1/1. Functionally, catalyzes the acyloin condensation reaction between C atoms 2 and 3 of pyruvate and glyceraldehyde 3-phosphate to yield 1-deoxy-D-xylulose-5-phosphate (DXP). The sequence is that of 1-deoxy-D-xylulose-5-phosphate synthase from Nitratiruptor sp. (strain SB155-2).